A 298-amino-acid chain; its full sequence is Bifunctional protein FolD (298 aa).

NADP(+) contacts are provided by residues 167–169 (GRS), serine 192, and isoleucine 233.

This sequence belongs to the tetrahydrofolate dehydrogenase/cyclohydrolase family. In terms of assembly, homodimer.

The catalysed reaction is (6R)-5,10-methylene-5,6,7,8-tetrahydrofolate + NADP(+) = (6R)-5,10-methenyltetrahydrofolate + NADPH. It carries out the reaction (6R)-5,10-methenyltetrahydrofolate + H2O = (6R)-10-formyltetrahydrofolate + H(+). Its pathway is one-carbon metabolism; tetrahydrofolate interconversion. Its function is as follows. Catalyzes the oxidation of 5,10-methylenetetrahydrofolate to 5,10-methenyltetrahydrofolate and then the hydrolysis of 5,10-methenyltetrahydrofolate to 10-formyltetrahydrofolate. This Caulobacter sp. (strain K31) protein is Bifunctional protein FolD.